Consider the following 158-residue polypeptide: PRA1 family protein 2 (158 aa).

A run of 4 helical transmembrane segments spans residues 36-58 (NLNF…TLFT), 62-79 (LLVA…LFFV), 88-108 (FAVL…VIVI), and 113-133 (GLTL…HSAL).

Belongs to the PRA1 family.

The protein localises to the membrane. May act as a general Rab protein regulator. The polypeptide is PRA1 family protein 2 (prafB) (Dictyostelium discoideum (Social amoeba)).